The following is a 365-amino-acid chain: PHD finger protein 6 (365 aa).

At Ser2 the chain carries N-acetylserine. Short sequence motifs (nuclear localization signal) lie at residues 13-16 (RQRK) and 129-133 (RKHKK). Residues 14 to 52 (QRKCGFCKSNRDKECGQLLISENQKVAAHHKCMLFSSAL) form a C2HC pre-PHD-type 1 zinc finger. Positions 14–132 (QRKCGFCKSN…IYMVYCRKHK (119 aa)) are extended PHD1 domain (ePHD1). The segment at 80 to 132 (LMCSLCHCPGATIGCDVKTCHRTYHYHCALHDKAQIREKPSQGIYMVYCRKHK) adopts a PHD-type 1 zinc-finger fold. A phosphoserine mark is found at Ser138, Ser145, and Ser155. The tract at residues 139–211 (EADLEESFNE…RSSPSDTRPK (73 aa)) is disordered. The Nucleolar localization signal signature appears at 157–169 (KSKKKSRKGRPRK). Basic residues predominate over residues 157–171 (KSKKKSRKGRPRKTN). Lys173 participates in a covalent cross-link: Glycyl lysine isopeptide (Lys-Gly) (interchain with G-Cter in SUMO2). 2 positions are modified to phosphoserine: Ser183 and Ser199. Residues 209 to 249 (RPKCGFCHVGEEENEARGKLHIFNAKKAAAHYKCMLFSSGT) form a C2HC pre-PHD-type 2 zinc finger. Residues 209–330 (RPKCGFCHVG…IYKLYCKNHS (122 aa)) form an extended PHD2 domain (ePHD2) region. Residue Lys227 forms a Glycyl lysine isopeptide (Lys-Gly) (interchain with G-Cter in SUMO2) linkage. Residues 278-330 (MKCTLCSQPGATIGCEIKACVKTYHYHCGVQDKAKYIENMSRGIYKLYCKNHS) form a PHD-type 2 zinc finger. The disordered stretch occupies residues 330–365 (SGNDERDEEDEERESKSRGKVEIDQQQLTQQQLNGN). Residues 342 to 352 (RESKSRGKVEI) show a composition bias toward basic and acidic residues. The segment covering 354–365 (QQQLTQQQLNGN) has biased composition (low complexity). Thr358 is subject to Phosphothreonine.

In terms of assembly, interacts with UBTF. Interacts with the NuRD complex component RBBP4 (via the nucleolar localization motif), the interaction mediates transcriptional repression activity.

It is found in the nucleus. Its subcellular location is the nucleolus. The protein localises to the chromosome. It localises to the centromere. The protein resides in the kinetochore. Its function is as follows. Transcriptional regulator that associates with ribosomal RNA promoters and suppresses ribosomal RNA (rRNA) transcription. The chain is PHD finger protein 6 (PHF6) from Pongo abelii (Sumatran orangutan).